Consider the following 308-residue polypeptide: RING-H2 finger protein ATL63 (308 aa).

Residues 29–49 (VLLAALVFLLLVVLFVLLLHF) form a helical membrane-spanning segment. The segment at 138–180 (CVICLGLWEAGDFGRKLRNCGHGFHVECIDMWLSSHSTCPLCR) adopts an RING-type; atypical zinc-finger fold. Positions 252-308 (VFDDDEEINDGGTRSDRRRSMSMTSSASSSLMRMLSSSSSRSERNKVFPTARQDSSK) are disordered. Low complexity predominate over residues 272–291 (MSMTSSASSSLMRMLSSSSS).

The protein belongs to the RING-type zinc finger family. ATL subfamily.

It localises to the membrane. It catalyses the reaction S-ubiquitinyl-[E2 ubiquitin-conjugating enzyme]-L-cysteine + [acceptor protein]-L-lysine = [E2 ubiquitin-conjugating enzyme]-L-cysteine + N(6)-ubiquitinyl-[acceptor protein]-L-lysine.. It functions in the pathway protein modification; protein ubiquitination. This chain is RING-H2 finger protein ATL63 (ATL63), found in Arabidopsis thaliana (Mouse-ear cress).